Consider the following 387-residue polypeptide: tRNA pseudouridine synthase B (387 aa).

Catalysis depends on aspartate 43, which acts as the Nucleophile.

This sequence belongs to the pseudouridine synthase TruB family. Type 1 subfamily.

It carries out the reaction uridine(55) in tRNA = pseudouridine(55) in tRNA. Functionally, responsible for synthesis of pseudouridine from uracil-55 in the psi GC loop of transfer RNAs. This chain is tRNA pseudouridine synthase B, found in Bifidobacterium longum (strain NCC 2705).